The sequence spans 221 residues: Putative hemin import ATP-binding protein HrtA (221 aa).

The ABC transporter domain maps to 3–221 (LQLKHITKTF…IEIQDGKIEL (219 aa)). An ATP-binding site is contributed by 39 to 46 (GASGSGKS).

The protein belongs to the ABC transporter superfamily. HrtA family. The complex is composed of two ATP-binding proteins (HrtA), two transmembrane proteins (HrtB) and a solute-binding protein.

The protein resides in the cell membrane. Its function is as follows. Part of the ABC transporter complex hrt involved in hemin import. Responsible for energy coupling to the transport system. The sequence is that of Putative hemin import ATP-binding protein HrtA (hrtA) from Staphylococcus haemolyticus (strain JCSC1435).